The primary structure comprises 1295 residues: Phosphoribosylformylglycinamidine synthase (1295 aa).

Residues 305-327 are disordered; that stretch reads WPGAATGSGGEIRDEGATGRGAK. ATP-binding positions include 307–318 and Ala678; that span reads GAATGSGGEIRD. Positions 718, 722, and 884 each coordinate Mg(2+). Residue Ser886 coordinates ATP. The Glutamine amidotransferase type-1 domain maps to 1042 to 1295; it reads VAVLREQGVN…IFRNARKQLG (254 aa). The Nucleophile role is filled by Cys1135. Catalysis depends on residues His1260 and Glu1262.

In the N-terminal section; belongs to the FGAMS family. In terms of assembly, monomer.

The protein localises to the cytoplasm. It carries out the reaction N(2)-formyl-N(1)-(5-phospho-beta-D-ribosyl)glycinamide + L-glutamine + ATP + H2O = 2-formamido-N(1)-(5-O-phospho-beta-D-ribosyl)acetamidine + L-glutamate + ADP + phosphate + H(+). It functions in the pathway purine metabolism; IMP biosynthesis via de novo pathway; 5-amino-1-(5-phospho-D-ribosyl)imidazole from N(2)-formyl-N(1)-(5-phospho-D-ribosyl)glycinamide: step 1/2. Its function is as follows. Phosphoribosylformylglycinamidine synthase involved in the purines biosynthetic pathway. Catalyzes the ATP-dependent conversion of formylglycinamide ribonucleotide (FGAR) and glutamine to yield formylglycinamidine ribonucleotide (FGAM) and glutamate. The protein is Phosphoribosylformylglycinamidine synthase of Shigella sonnei (strain Ss046).